A 194-amino-acid chain; its full sequence is Glycerol-3-phosphate acyltransferase (194 aa).

The next 6 membrane-spanning stretches (helical) occupy residues 2–22, 52–72, 80–100, 112–132, 137–157, and 161–181; these read AFFCFIVLTYFIGAIPSGVWI, LGVAVLIMDVLKGFIPLYIAS, DLVILGLVAILAHTFSCFISF, VFLFLIPVITLILLAIFILVA, YVSLASITAAFLLPIFTFFTH, and YLFALSVIIAVFVIYRHKTNI.

This sequence belongs to the PlsY family. As to quaternary structure, probably interacts with PlsX.

Its subcellular location is the cell inner membrane. It carries out the reaction an acyl phosphate + sn-glycerol 3-phosphate = a 1-acyl-sn-glycero-3-phosphate + phosphate. It participates in lipid metabolism; phospholipid metabolism. In terms of biological role, catalyzes the transfer of an acyl group from acyl-phosphate (acyl-PO(4)) to glycerol-3-phosphate (G3P) to form lysophosphatidic acid (LPA). This enzyme utilizes acyl-phosphate as fatty acyl donor, but not acyl-CoA or acyl-ACP. This chain is Glycerol-3-phosphate acyltransferase, found in Fusobacterium nucleatum subsp. nucleatum (strain ATCC 25586 / DSM 15643 / BCRC 10681 / CIP 101130 / JCM 8532 / KCTC 2640 / LMG 13131 / VPI 4355).